The primary structure comprises 386 residues: Queuine tRNA-ribosyltransferase (386 aa).

Asp-102 serves as the catalytic Proton acceptor. Substrate is bound by residues 102–106, Asp-156, Gln-203, and Gly-230; that span reads DSGGY. The segment at 261-267 is RNA binding; the sequence is GVGKPDD. The Nucleophile role is filled by Asp-280. Residues 285 to 289 are RNA binding; important for wobble base 34 recognition; it reads TRSGR. Zn(2+) is bound by residues Cys-318, Cys-320, Cys-323, and His-349.

Belongs to the queuine tRNA-ribosyltransferase family. Homodimer. Within each dimer, one monomer is responsible for RNA recognition and catalysis, while the other monomer binds to the replacement base PreQ1. Zn(2+) is required as a cofactor.

It carries out the reaction 7-aminomethyl-7-carbaguanine + guanosine(34) in tRNA = 7-aminomethyl-7-carbaguanosine(34) in tRNA + guanine. Its pathway is tRNA modification; tRNA-queuosine biosynthesis. Catalyzes the base-exchange of a guanine (G) residue with the queuine precursor 7-aminomethyl-7-deazaguanine (PreQ1) at position 34 (anticodon wobble position) in tRNAs with GU(N) anticodons (tRNA-Asp, -Asn, -His and -Tyr). Catalysis occurs through a double-displacement mechanism. The nucleophile active site attacks the C1' of nucleotide 34 to detach the guanine base from the RNA, forming a covalent enzyme-RNA intermediate. The proton acceptor active site deprotonates the incoming PreQ1, allowing a nucleophilic attack on the C1' of the ribose to form the product. After dissociation, two additional enzymatic reactions on the tRNA convert PreQ1 to queuine (Q), resulting in the hypermodified nucleoside queuosine (7-(((4,5-cis-dihydroxy-2-cyclopenten-1-yl)amino)methyl)-7-deazaguanosine). The protein is Queuine tRNA-ribosyltransferase of Zymomonas mobilis subsp. mobilis (strain ATCC 31821 / ZM4 / CP4).